A 374-amino-acid chain; its full sequence is Ribonuclease D (374 aa).

Positions 3-171 (YQLITTDDGL…MAIRLVEETT (169 aa)) constitute a 3'-5' exonuclease domain. In terms of domain architecture, HRDC spans 210 to 289 (KGRHLACLQK…AETQTMDAAE (80 aa)).

This sequence belongs to the RNase D family. The cofactor is a divalent metal cation.

The protein resides in the cytoplasm. The catalysed reaction is Exonucleolytic cleavage that removes extra residues from the 3'-terminus of tRNA to produce 5'-mononucleotides.. In terms of biological role, exonuclease involved in the 3' processing of various precursor tRNAs. Initiates hydrolysis at the 3'-terminus of an RNA molecule and releases 5'-mononucleotides. In Musicola paradisiaca (strain Ech703) (Dickeya paradisiaca), this protein is Ribonuclease D.